Here is a 517-residue protein sequence, read N- to C-terminus: NEDD8-activating enzyme E1 regulatory subunit (517 aa).

It belongs to the ubiquitin-activating E1 family. ULA1 subfamily. Heterodimer of uba3 and ula1. The complex binds NEDD8/ubl1 and ubc12.

It is found in the cytoplasm. Its subcellular location is the nucleus. The protein operates within protein modification; protein neddylation. Functionally, regulatory subunit of the dimeric uba3-ula1 E1 enzyme. E1 activates NEDD8/ubl1 by first adenylating its C-terminal glycine residue with ATP, thereafter linking this residue to the side chain of the catalytic cysteine, yielding a NEDD8-UBA3 thioester and free AMP. E1 finally transfers NEDD8 to the catalytic cysteine of ubc12. This chain is NEDD8-activating enzyme E1 regulatory subunit (uba5), found in Schizosaccharomyces pombe (strain 972 / ATCC 24843) (Fission yeast).